A 432-amino-acid polypeptide reads, in one-letter code: Glutamate-1-semialdehyde 2,1-aminomutase 2 (432 aa).

Position 268 is an N6-(pyridoxal phosphate)lysine (K268).

This sequence belongs to the class-III pyridoxal-phosphate-dependent aminotransferase family. HemL subfamily. Homodimer. Requires pyridoxal 5'-phosphate as cofactor.

Its subcellular location is the cytoplasm. The catalysed reaction is (S)-4-amino-5-oxopentanoate = 5-aminolevulinate. It functions in the pathway porphyrin-containing compound metabolism; protoporphyrin-IX biosynthesis; 5-aminolevulinate from L-glutamyl-tRNA(Glu): step 2/2. In Listeria welshimeri serovar 6b (strain ATCC 35897 / DSM 20650 / CCUG 15529 / CIP 8149 / NCTC 11857 / SLCC 5334 / V8), this protein is Glutamate-1-semialdehyde 2,1-aminomutase 2.